A 513-amino-acid polypeptide reads, in one-letter code: ATP synthase subunit alpha (513 aa).

Residue Gly171–Thr178 coordinates ATP.

This sequence belongs to the ATPase alpha/beta chains family. In terms of assembly, F-type ATPases have 2 components, CF(1) - the catalytic core - and CF(0) - the membrane proton channel. CF(1) has five subunits: alpha(3), beta(3), gamma(1), delta(1), epsilon(1). CF(0) has three main subunits: a(1), b(2) and c(9-12). The alpha and beta chains form an alternating ring which encloses part of the gamma chain. CF(1) is attached to CF(0) by a central stalk formed by the gamma and epsilon chains, while a peripheral stalk is formed by the delta and b chains.

It is found in the cell inner membrane. The enzyme catalyses ATP + H2O + 4 H(+)(in) = ADP + phosphate + 5 H(+)(out). In terms of biological role, produces ATP from ADP in the presence of a proton gradient across the membrane. The alpha chain is a regulatory subunit. The sequence is that of ATP synthase subunit alpha from Wolbachia sp. subsp. Drosophila simulans (strain wRi).